Consider the following 248-residue polypeptide: Probable phosphatase Sfri_3709 (248 aa).

Zn(2+) is bound by residues His-8, His-10, His-16, His-41, Glu-74, His-102, His-132, Asp-193, and His-195.

The protein belongs to the PHP family. The cofactor is Zn(2+).

The polypeptide is Probable phosphatase Sfri_3709 (Shewanella frigidimarina (strain NCIMB 400)).